Here is a 481-residue protein sequence, read N- to C-terminus: 3-ketoacyl-CoA synthase 8 (481 aa).

A run of 2 helical transmembrane segments spans residues L4–G24 and L44–T64. Residues Y61 to Y358 form the FAE domain. Residues C213, H292, H376, H380, H409, and N413 contribute to the active site.

This sequence belongs to the thiolase-like superfamily. Chalcone/stilbene synthases family. As to expression, expressed in leaves and seedlings.

It is found in the endoplasmic reticulum membrane. It carries out the reaction a very-long-chain acyl-CoA + malonyl-CoA + H(+) = a very-long-chain 3-oxoacyl-CoA + CO2 + CoA. Its pathway is lipid metabolism; fatty acid biosynthesis. The protein is 3-ketoacyl-CoA synthase 8 of Arabidopsis thaliana (Mouse-ear cress).